We begin with the raw amino-acid sequence, 374 residues long: DNA integrity scanning protein DisA (374 aa).

The region spanning 20-158 (DGLMRASLSA…DGMRRVLEDS (139 aa)) is the DAC domain. ATP contacts are provided by residues Gly87, Leu105, and 118-122 (TRHRT).

The protein belongs to the DisA family. As to quaternary structure, homooctamer. The cofactor is Mg(2+).

The catalysed reaction is 2 ATP = 3',3'-c-di-AMP + 2 diphosphate. Participates in a DNA-damage check-point that is active prior to asymmetric division when DNA is damaged. DisA forms globular foci that rapidly scan along the chromosomes during sporulation, searching for lesions. When a lesion is present, DisA pauses at the lesion site. This triggers a cellular response that culminates in a temporary block in sporulation initiation. Functionally, also has diadenylate cyclase activity, catalyzing the condensation of 2 ATP molecules into cyclic di-AMP (c-di-AMP). c-di-AMP acts as a signaling molecule that couples DNA integrity with progression of sporulation. The rise in c-di-AMP level generated by DisA while scanning the chromosome, operates as a positive signal that advances sporulation; upon encountering a lesion, the DisA focus arrests at the damaged site and halts c-di-AMP synthesis. This Streptomyces avermitilis (strain ATCC 31267 / DSM 46492 / JCM 5070 / NBRC 14893 / NCIMB 12804 / NRRL 8165 / MA-4680) protein is DNA integrity scanning protein DisA.